A 468-amino-acid polypeptide reads, in one-letter code: 3-isopropylmalate dehydratase large subunit (468 aa).

Positions 347, 407, and 410 each coordinate [4Fe-4S] cluster.

The protein belongs to the aconitase/IPM isomerase family. LeuC type 1 subfamily. Heterodimer of LeuC and LeuD. [4Fe-4S] cluster serves as cofactor.

The enzyme catalyses (2R,3S)-3-isopropylmalate = (2S)-2-isopropylmalate. It participates in amino-acid biosynthesis; L-leucine biosynthesis; L-leucine from 3-methyl-2-oxobutanoate: step 2/4. Catalyzes the isomerization between 2-isopropylmalate and 3-isopropylmalate, via the formation of 2-isopropylmaleate. This chain is 3-isopropylmalate dehydratase large subunit, found in Rippkaea orientalis (strain PCC 8801 / RF-1) (Cyanothece sp. (strain PCC 8801)).